The following is a 160-amino-acid chain: Fimbrial protein (160 aa).

Positions 1 to 7 (MKSLQKG) are cleaved as a propeptide — leader sequence. F8 carries the post-translational modification N-methylphenylalanine. The helical transmembrane segment at 8–28 (FTLIELMIVVAIIGILAAFAI) threads the bilayer.

The protein belongs to the N-Me-Phe pilin family. The pili are polar flexible filaments of about 5.4 nanometers diameter and 2.5 micrometers average length; they consist of only a single polypeptide chain arranged in a helical configuration of five subunits per turn in the assembled pilus.

It localises to the fimbrium. The protein localises to the membrane. The sequence is that of Fimbrial protein (fimA) from Dichelobacter nodosus (Bacteroides nodosus).